Reading from the N-terminus, the 513-residue chain is Putative ribose/galactose/methyl galactoside import ATP-binding protein 3 (513 aa).

2 consecutive ABC transporter domains span residues 15–252 (IELT…VGRQ) and 263–508 (TSAN…TQRE). 47–54 (GENGAGKS) is a binding site for ATP.

It belongs to the ABC transporter superfamily. Carbohydrate importer 2 (CUT2) (TC 3.A.1.2) family.

It localises to the cell inner membrane. The enzyme catalyses D-ribose(out) + ATP + H2O = D-ribose(in) + ADP + phosphate + H(+). It carries out the reaction D-galactose(out) + ATP + H2O = D-galactose(in) + ADP + phosphate + H(+). Part of an ABC transporter complex involved in carbohydrate import. Could be involved in ribose, galactose and/or methyl galactoside import. Responsible for energy coupling to the transport system. This Burkholderia ambifaria (strain ATCC BAA-244 / DSM 16087 / CCUG 44356 / LMG 19182 / AMMD) (Burkholderia cepacia (strain AMMD)) protein is Putative ribose/galactose/methyl galactoside import ATP-binding protein 3.